Consider the following 189-residue polypeptide: Glucose-6-phosphate isomerase (189 aa).

4 residues coordinate Fe cation: histidine 88, histidine 90, glutamate 97, and histidine 136.

Belongs to the archaeal-type GPI family. As to quaternary structure, homodimer. Fe cation is required as a cofactor.

It localises to the cytoplasm. It carries out the reaction alpha-D-glucose 6-phosphate = beta-D-fructose 6-phosphate. It functions in the pathway carbohydrate degradation; glycolysis; D-glyceraldehyde 3-phosphate and glycerone phosphate from D-glucose: step 2/4. Its activity is regulated as follows. Inhibited by mannose 6-phosphate, fructose 1-phosphate and fructose 1,6-bisphosphate. The polypeptide is Glucose-6-phosphate isomerase (pgiA) (Pyrococcus furiosus (strain ATCC 43587 / DSM 3638 / JCM 8422 / Vc1)).